The following is a 259-amino-acid chain: Ubiquitin-conjugating enzyme E2 J2 (259 aa).

The Cytoplasmic segment spans residues 1–226 (MSSNSVKRAP…AGLQQANRHH (226 aa)). Residues 12–162 (TATQRLKQDY…DKVFCELFPE (151 aa)) form the UBC core domain. Cys94 acts as the Glycyl thioester intermediate in catalysis. The interval 174–200 (QDELSSRPQALPLPDVVPDGETHHGQH) is disordered. The helical; Anchor for type IV membrane protein transmembrane segment at 227–247 (GLLGGALANLFVIVGFAAFAY) threads the bilayer. Residues 248 to 259 (TVKYVLRSIAQE) are Lumenal-facing.

This sequence belongs to the ubiquitin-conjugating enzyme family.

Its subcellular location is the endoplasmic reticulum membrane. It carries out the reaction S-ubiquitinyl-[E1 ubiquitin-activating enzyme]-L-cysteine + [E2 ubiquitin-conjugating enzyme]-L-cysteine = [E1 ubiquitin-activating enzyme]-L-cysteine + S-ubiquitinyl-[E2 ubiquitin-conjugating enzyme]-L-cysteine.. Its pathway is protein modification; protein ubiquitination. Its function is as follows. Catalyzes the covalent attachment of ubiquitin to other proteins. Seems to function in the selective degradation of misfolded membrane proteins from the endoplasmic reticulum (ERAD). In cooperation with the GATOR2 complex, catalyzes 'Lys-6'-linked ubiquitination of NPRL2. The sequence is that of Ubiquitin-conjugating enzyme E2 J2 (UBE2J2) from Bos taurus (Bovine).